Here is a 236-residue protein sequence, read N- to C-terminus: Eukaryotic translation initiation factor 3 subunit J (236 aa).

Residues 20–88 form a disordered region; that stretch reads ANNINKWEGE…AEEEKRLANL (69 aa). Residues 28 to 46 show a composition bias toward acidic residues; sequence GEDDDEDVKESWEDEEEKK. Composition is skewed to basic and acidic residues over residues 47 to 58 and 68 to 88; these read DEEKPTKTEVPV and AKLE…LANL.

Belongs to the eIF-3 subunit J family. Component of the eukaryotic translation initiation factor 3 (eIF-3) complex. The eIF-3 complex interacts with pix.

Its subcellular location is the cytoplasm. Component of the eukaryotic translation initiation factor 3 (eIF-3) complex, which is involved in protein synthesis of a specialized repertoire of mRNAs and, together with other initiation factors, stimulates binding of mRNA and methionyl-tRNAi to the 40S ribosome. The eIF-3 complex specifically targets and initiates translation of a subset of mRNAs involved in cell proliferation. The chain is Eukaryotic translation initiation factor 3 subunit J from Drosophila willistoni (Fruit fly).